Reading from the N-terminus, the 416-residue chain is MTKADLIVGIQWGDEGKGKIVDMLSQNYDVVCRSGGGHNAGHTIWVDGMRYALHLVPSGILHKNIINIIGNGVVVNPEVLISEMAQFDHLEGRFFISDRAHLNLAHHSLIDQAKERLKGDKAIGTTGKGIGPAYSDKISRSGHRVGELLDPKALCESLMKDFESNKPYFDALSIEIPPKDKILADLVRFKDVLAPFITNTTELLWRAMDDNKKVLLEGAQGTLLDIDHGTYPYVTSSNTVSAGACTGLGLSPKSIGKVIGIIKAYSTRVGNGAFPTEDLGSDGENLCEIGKEFGTTTGRKRRCGWLDVVGIKYSSRLNGVDTYALMKLDVLDGFKNVKICKAYEYKGEVIDYFPSDLQNATPIYEELEGWDSINGIKKYEDLPLNARKYIERIEELTGVKIGFISTSPERNDTIVR.

Residues 13–19 (GDEGKGK) and 41–43 (GHT) each bind GTP. The active-site Proton acceptor is the Asp-14. 2 residues coordinate Mg(2+): Asp-14 and Gly-41. IMP-binding positions include 14–17 (DEGK), 39–42 (NAGH), Thr-126, Arg-140, Gln-220, Thr-235, and Arg-299. His-42 functions as the Proton donor in the catalytic mechanism. Position 295-301 (295-301 (TTTGRKR)) interacts with substrate. Residues Arg-301, 327 to 329 (KLD), and 405 to 407 (STS) each bind GTP.

The protein belongs to the adenylosuccinate synthetase family. In terms of assembly, homodimer. Mg(2+) is required as a cofactor.

Its subcellular location is the cytoplasm. It catalyses the reaction IMP + L-aspartate + GTP = N(6)-(1,2-dicarboxyethyl)-AMP + GDP + phosphate + 2 H(+). It participates in purine metabolism; AMP biosynthesis via de novo pathway; AMP from IMP: step 1/2. Its function is as follows. Plays an important role in the de novo pathway of purine nucleotide biosynthesis. Catalyzes the first committed step in the biosynthesis of AMP from IMP. This Campylobacter fetus subsp. fetus (strain 82-40) protein is Adenylosuccinate synthetase.